A 479-amino-acid polypeptide reads, in one-letter code: Ubiquinone biosynthesis monooxygenase COQ6, mitochondrial (479 aa).

The protein belongs to the UbiH/COQ6 family. Component of a multi-subunit COQ enzyme complex, composed of at least COQ3, COQ4, COQ5, COQ6, COQ7 and COQ9. Requires FAD as cofactor.

Its subcellular location is the mitochondrion inner membrane. It catalyses the reaction 4-hydroxy-3-(all-trans-decaprenyl)benzoate + 2 reduced [2Fe-2S]-[ferredoxin] + O2 + 2 H(+) = 3,4-dihydroxy-5-(all-trans-decaprenyl)benzoate + 2 oxidized [2Fe-2S]-[ferredoxin] + H2O. The enzyme catalyses 2-methoxy-6-(all-trans-decaprenyl)phenol + 2 reduced [2Fe-2S]-[ferredoxin] + O2 + 2 H(+) = 2-methoxy-6-(all-trans-decaprenyl)benzene-1,4-diol + 2 oxidized [2Fe-2S]-[ferredoxin] + H2O. The protein operates within cofactor biosynthesis; ubiquinone biosynthesis. In terms of biological role, FAD-dependent monooxygenase required for two non-consecutive steps during ubiquinone biosynthesis. Required for the C5-ring hydroxylation during ubiquinone biosynthesis by catalyzing the hydroxylation of 4-hydroxy-3-(all-trans-decaprenyl)benzoic acid to 3,4-dihydroxy-5-(all-trans-decaprenyl)benzoic acid. Also acts downstream of COQ4, for the C1-hydroxylation during ubiquinone biosynthesis by catalyzing the hydroxylation of 2-methoxy-6-(all-trans-decaprenyl)phenol to 2-methoxy-6-(all-trans-decaprenyl)benzene-1,4-diol. The electrons required for the hydroxylation reaction are funneled indirectly to coq6 from NADPH via a ferredoxin/ferredoxin reductase system. The protein is Ubiquinone biosynthesis monooxygenase COQ6, mitochondrial of Schizosaccharomyces pombe (strain 972 / ATCC 24843) (Fission yeast).